Consider the following 31-residue polypeptide: Cyclotide mech-6 (31 aa).

A cross-link (cyclopeptide (Gly-Asn)) is located at residues 1-31 (GVIPCGESCVFIPCISSVVGCTCKNKVCYRN). Intrachain disulfides connect Cys5–Cys21, Cys9–Cys23, and Cys14–Cys28.

This is a cyclic peptide. Post-translationally, contains 3 disulfide bonds.

Functionally, probably participates in a plant defense mechanism (Potential). Binds to and induces leakage in phospholipd membranes, particularly ones containing 1-palmitoyl-2-oleophosphatidylethanolamine (POPE). This is Cyclotide mech-6 from Melicytus chathamicus (Chatham Island mahoe).